Consider the following 498-residue polypeptide: ATP synthase subunit beta, chloroplastic (498 aa).

172-179 (GGAGVGKT) contacts ATP.

It belongs to the ATPase alpha/beta chains family. F-type ATPases have 2 components, CF(1) - the catalytic core - and CF(0) - the membrane proton channel. CF(1) has five subunits: alpha(3), beta(3), gamma(1), delta(1), epsilon(1). CF(0) has four main subunits: a(1), b(1), b'(1) and c(9-12).

Its subcellular location is the plastid. The protein resides in the chloroplast thylakoid membrane. The enzyme catalyses ATP + H2O + 4 H(+)(in) = ADP + phosphate + 5 H(+)(out). Produces ATP from ADP in the presence of a proton gradient across the membrane. The catalytic sites are hosted primarily by the beta subunits. This chain is ATP synthase subunit beta, chloroplastic, found in Nandina domestica (Heavenly bamboo).